A 583-amino-acid polypeptide reads, in one-letter code: Aspartate--tRNA ligase (583 aa).

E174 contacts L-aspartate. Positions 198–201 are aspartate; the sequence is QITK. Residue R220 coordinates L-aspartate. Residues 220-222 and Q229 each bind ATP; that span reads RDE. H443 lines the L-aspartate pocket. E477 is a binding site for ATP. R484 contacts L-aspartate. 529 to 532 is a binding site for ATP; it reads GLDR.

Belongs to the class-II aminoacyl-tRNA synthetase family. Type 1 subfamily. As to quaternary structure, homodimer.

Its subcellular location is the cytoplasm. It carries out the reaction tRNA(Asp) + L-aspartate + ATP = L-aspartyl-tRNA(Asp) + AMP + diphosphate. In terms of biological role, catalyzes the attachment of L-aspartate to tRNA(Asp) in a two-step reaction: L-aspartate is first activated by ATP to form Asp-AMP and then transferred to the acceptor end of tRNA(Asp). This Streptococcus agalactiae serotype III (strain NEM316) protein is Aspartate--tRNA ligase.